The primary structure comprises 205 residues: Small ribosomal subunit protein uS4 (205 aa).

Positions 1 to 16 (MSKRESSKYKIDRRMG) are enriched in basic and acidic residues. A disordered region spans residues 1–46 (MSKRESSKYKIDRRMGENIWGRPKSPVNRREYGPGQHGQRRKGKLS). The S4 RNA-binding domain maps to 94 to 157 (SRLDAIVYRA…KQLVIVLESV (64 aa)).

This sequence belongs to the universal ribosomal protein uS4 family. Part of the 30S ribosomal subunit. Contacts protein S5. The interaction surface between S4 and S5 is involved in control of translational fidelity.

One of the primary rRNA binding proteins, it binds directly to 16S rRNA where it nucleates assembly of the body of the 30S subunit. In terms of biological role, with S5 and S12 plays an important role in translational accuracy. The sequence is that of Small ribosomal subunit protein uS4 from Rhizobium rhizogenes (strain K84 / ATCC BAA-868) (Agrobacterium radiobacter).